Reading from the N-terminus, the 127-residue chain is Aspartate 1-decarboxylase (127 aa).

Ser25 (schiff-base intermediate with substrate; via pyruvic acid) is an active-site residue. Ser25 bears the Pyruvic acid (Ser) mark. Position 57 (Thr57) interacts with substrate. Catalysis depends on Tyr58, which acts as the Proton donor. 73 to 75 (GAA) serves as a coordination point for substrate.

This sequence belongs to the PanD family. As to quaternary structure, heterooctamer of four alpha and four beta subunits. Requires pyruvate as cofactor. Post-translationally, is synthesized initially as an inactive proenzyme, which is activated by self-cleavage at a specific serine bond to produce a beta-subunit with a hydroxyl group at its C-terminus and an alpha-subunit with a pyruvoyl group at its N-terminus.

Its subcellular location is the cytoplasm. It catalyses the reaction L-aspartate + H(+) = beta-alanine + CO2. It functions in the pathway cofactor biosynthesis; (R)-pantothenate biosynthesis; beta-alanine from L-aspartate: step 1/1. Functionally, catalyzes the pyruvoyl-dependent decarboxylation of aspartate to produce beta-alanine. This chain is Aspartate 1-decarboxylase, found in Carboxydothermus hydrogenoformans (strain ATCC BAA-161 / DSM 6008 / Z-2901).